A 325-amino-acid chain; its full sequence is Acetyl-coenzyme A carboxylase carboxyl transferase subunit beta (325 aa).

The 270-residue stretch at 24–293 (LWIKCPDSGH…AEIEVVTPEP (270 aa)) folds into the CoA carboxyltransferase N-terminal domain.

The protein belongs to the AccD/PCCB family. In terms of assembly, acetyl-CoA carboxylase is a heterohexamer composed of biotin carboxyl carrier protein (AccB), biotin carboxylase (AccC) and two subunits each of ACCase subunit alpha (AccA) and ACCase subunit beta (AccD).

It localises to the cytoplasm. It catalyses the reaction N(6)-carboxybiotinyl-L-lysyl-[protein] + acetyl-CoA = N(6)-biotinyl-L-lysyl-[protein] + malonyl-CoA. It participates in lipid metabolism; malonyl-CoA biosynthesis; malonyl-CoA from acetyl-CoA: step 1/1. Its function is as follows. Component of the acetyl coenzyme A carboxylase (ACC) complex. Biotin carboxylase (BC) catalyzes the carboxylation of biotin on its carrier protein (BCCP) and then the CO(2) group is transferred by the transcarboxylase to acetyl-CoA to form malonyl-CoA. This chain is Acetyl-coenzyme A carboxylase carboxyl transferase subunit beta, found in Rhodopseudomonas palustris (strain BisA53).